The primary structure comprises 92 residues: Small ribosomal subunit protein uS19 (92 aa).

It belongs to the universal ribosomal protein uS19 family.

Protein S19 forms a complex with S13 that binds strongly to the 16S ribosomal RNA. In Granulibacter bethesdensis (strain ATCC BAA-1260 / CGDNIH1), this protein is Small ribosomal subunit protein uS19.